Reading from the N-terminus, the 405-residue chain is Bone morphogenetic protein 4 (405 aa).

Residues 1–19 form the signal peptide; sequence MIPGNRMLMVILLCQVLLG. Residues 20 to 291 constitute a propeptide that is removed on maturation; sequence GTNHASLIPE…GHALTRRARR (272 aa). N-linked (GlcNAc...) asparagine glycans are attached at residues N144, N208, N347, and N362. 3 disulfide bridges follow: C305–C370, C334–C402, and C338–C404.

This sequence belongs to the TGF-beta family. Homodimer; disulfide-linked. Part of a complex consisting of TWSG1 and CHRD. Forms a ternary complex with chordin/CHRD and TSKU.

It localises to the secreted. In terms of biological role, negatively regulates the structure and function of the limb apical ectodermal ridge. The protein is Bone morphogenetic protein 4 (BMP4) of Gallus gallus (Chicken).